The sequence spans 447 residues: Probable glycine dehydrogenase (decarboxylating) subunit 1 (447 aa).

Belongs to the GcvP family. N-terminal subunit subfamily. The glycine cleavage system is composed of four proteins: P, T, L and H. In this organism, the P 'protein' is a heterodimer of two subunits.

The enzyme catalyses N(6)-[(R)-lipoyl]-L-lysyl-[glycine-cleavage complex H protein] + glycine + H(+) = N(6)-[(R)-S(8)-aminomethyldihydrolipoyl]-L-lysyl-[glycine-cleavage complex H protein] + CO2. The glycine cleavage system catalyzes the degradation of glycine. The P protein binds the alpha-amino group of glycine through its pyridoxal phosphate cofactor; CO(2) is released and the remaining methylamine moiety is then transferred to the lipoamide cofactor of the H protein. In Bacillus thuringiensis subsp. konkukian (strain 97-27), this protein is Probable glycine dehydrogenase (decarboxylating) subunit 1.